The sequence spans 349 residues: ATPase GET3 (349 aa).

ATP is bound at residue Lys-26–Thr-33. Residue Asp-57 is part of the active site. Residues Glu-240 and Asn-267 each coordinate ATP. Cys-280 and Cys-283 together coordinate Zn(2+).

This sequence belongs to the arsA ATPase family. In terms of assembly, homodimer. Component of the Golgi to ER traffic (GET) complex, which is composed of GET1, GET2 and GET3. Within the complex, GET1 and GET2 form a heterotetramer which is stabilized by phosphatidylinositol binding and which binds to the GET3 homodimer. Interacts with the chloride channel protein GEF1.

The protein localises to the cytoplasm. Its subcellular location is the endoplasmic reticulum. It localises to the golgi apparatus. Functionally, ATPase required for the post-translational delivery of tail-anchored (TA) proteins to the endoplasmic reticulum. Recognizes and selectively binds the transmembrane domain of TA proteins in the cytosol. This complex then targets to the endoplasmic reticulum by membrane-bound receptors GET1 and GET2, where the tail-anchored protein is released for insertion. This process is regulated by ATP binding and hydrolysis. ATP binding drives the homodimer towards the closed dimer state, facilitating recognition of newly synthesized TA membrane proteins. ATP hydrolysis is required for insertion. Subsequently, the homodimer reverts towards the open dimer state, lowering its affinity for the GET1-GET2 receptor, and returning it to the cytosol to initiate a new round of targeting. Cooperates with the HDEL receptor ERD2 to mediate the ATP-dependent retrieval of resident ER proteins that contain a C-terminal H-D-E-L retention signal from the Golgi to the ER. Involved in low-level resistance to the oxyanions arsenite and arsenate, and in heat tolerance. This is ATPase GET3 from Lachancea thermotolerans (strain ATCC 56472 / CBS 6340 / NRRL Y-8284) (Yeast).